A 181-amino-acid polypeptide reads, in one-letter code: MNTEGASLSEQLLDAARRNNLDLLETVFDSLDNDPEKIAKLINESKEPLGNTALHLCCKYGSWEVLDKILDQDGEIEIDPQNDVDGDTPLHVTVRYSQEEPEHGTFIARNLIEVGADPRVRNYNNQKPVDLVHGDELDELIDLLQGAELAIDSTNGSGDNNEDGEMIDDGPSDDDEEDDKK.

Met1 bears the N-acetylmethionine mark. 2 ANK repeats span residues 49–78 (LGNT…EIEI) and 85–120 (DGDT…DPRV). The segment at 151-181 (IDSTNGSGDNNEDGEMIDDGPSDDDEEDDKK) is disordered. A compositionally biased stretch (acidic residues) spans 160–181 (NNEDGEMIDDGPSDDDEEDDKK). Residue Ser172 is modified to Phosphoserine.

This Saccharomyces cerevisiae (strain ATCC 204508 / S288c) (Baker's yeast) protein is Ankyrin repeat-containing protein YGL242C.